We begin with the raw amino-acid sequence, 175 residues long: Probable coatomer subunit zeta-A (175 aa).

The protein belongs to the adaptor complexes small subunit family. Oligomeric complex that consists of at least the alpha, beta, beta', gamma, delta, epsilon and zeta subunits.

Its subcellular location is the cytoplasm. It localises to the golgi apparatus membrane. It is found in the cytoplasmic vesicle. The protein resides in the COPI-coated vesicle membrane. Functionally, the coatomer is a cytosolic protein complex that binds to dilysine motifs and reversibly associates with Golgi non-clathrin-coated vesicles, which further mediate biosynthetic protein transport from the ER, via the Golgi up to the trans Golgi network. Coatomer complex is required for budding from Golgi membranes, and is essential for the retrograde Golgi-to-ER transport of dilysine-tagged proteins. The zeta subunit may be involved in regulating the coat assembly and, hence, the rate of biosynthetic protein transport due to its association-dissociation properties with the coatomer complex. The sequence is that of Probable coatomer subunit zeta-A (copZa) from Dictyostelium discoideum (Social amoeba).